Reading from the N-terminus, the 368-residue chain is Histidinol-phosphate aminotransferase (368 aa).

Residue Lys229 is modified to N6-(pyridoxal phosphate)lysine.

This sequence belongs to the class-II pyridoxal-phosphate-dependent aminotransferase family. Histidinol-phosphate aminotransferase subfamily. In terms of assembly, homodimer. The cofactor is pyridoxal 5'-phosphate.

The catalysed reaction is L-histidinol phosphate + 2-oxoglutarate = 3-(imidazol-4-yl)-2-oxopropyl phosphate + L-glutamate. The protein operates within amino-acid biosynthesis; L-histidine biosynthesis; L-histidine from 5-phospho-alpha-D-ribose 1-diphosphate: step 7/9. The sequence is that of Histidinol-phosphate aminotransferase from Acidovorax sp. (strain JS42).